The following is a 122-amino-acid chain: uncharacterized protein (122 aa).

This is an uncharacterized protein from Dictyostelium discoideum (Social amoeba).